The primary structure comprises 271 residues: Tryptophan synthase alpha chain (271 aa).

Residues Glu-56 and Asp-67 each act as proton acceptor in the active site.

Belongs to the TrpA family. In terms of assembly, tetramer of two alpha and two beta chains.

The enzyme catalyses (1S,2R)-1-C-(indol-3-yl)glycerol 3-phosphate + L-serine = D-glyceraldehyde 3-phosphate + L-tryptophan + H2O. Its pathway is amino-acid biosynthesis; L-tryptophan biosynthesis; L-tryptophan from chorismate: step 5/5. Functionally, the alpha subunit is responsible for the aldol cleavage of indoleglycerol phosphate to indole and glyceraldehyde 3-phosphate. In Mycobacterium intracellulare, this protein is Tryptophan synthase alpha chain.